Reading from the N-terminus, the 460-residue chain is MKTFTPRPYQHLIINHLLDIKRSNVWAGMGMGKTAATLTALENLYLSGSETKPTLVLAPLRVAQSTWPDEALKWSHLRNIEVQPIIGSAKARIAALKNTHASVFTVNYDNLVWLVDILGDTWPFGTIIADESTRLKSFRLRKGGKRTAALAKIAHKSVHRWVNLTGTPSPNGLMDLWGQAWFVDQGERLGRTYNAFTSRWFKRIQLPGQQWSRFEPLGFAHLQIPLALSDVTLSLDAADWFDIDEPIHNVINVELPAKARAHYHAMEKELFLELGESAIEALNAAAKTIKILQIASGAIYSDDNRNWTEIHDAKIQALESIVNESGGTPVLVAYHWKHDLERLLKAFPKGKNLDANPRTLTDWNNGKIPLLFAHPASCGHGLNLQDGGNILVFFSHWWDLEQYQQIIERIGPTRQAQAGHNRPVFIHHIVAKDTLDEVVMERRNSKRAIQDLLLEAMKRK.

Residues 14-186 form the Helicase ATP-binding domain; it reads INHLLDIKRS…WGQAWFVDQG (173 aa).

The sequence is that of Putative protein p41 (41) from Escherichia coli (Bacteriophage APSE-1).